An 85-amino-acid polypeptide reads, in one-letter code: Phosphoribosyl-AMP cyclohydrolase (85 aa).

Asp-48 provides a ligand contact to Mg(2+). Cys-49 provides a ligand contact to Zn(2+). Mg(2+)-binding residues include Asp-50 and Asp-52. Positions 65 and 72 each coordinate Zn(2+).

Belongs to the PRA-CH family. As to quaternary structure, homodimer. Requires Mg(2+) as cofactor. It depends on Zn(2+) as a cofactor.

It is found in the cytoplasm. The enzyme catalyses 1-(5-phospho-beta-D-ribosyl)-5'-AMP + H2O = 1-(5-phospho-beta-D-ribosyl)-5-[(5-phospho-beta-D-ribosylamino)methylideneamino]imidazole-4-carboxamide. Its pathway is amino-acid biosynthesis; L-histidine biosynthesis; L-histidine from 5-phospho-alpha-D-ribose 1-diphosphate: step 3/9. Functionally, catalyzes the hydrolysis of the adenine ring of phosphoribosyl-AMP. This is Phosphoribosyl-AMP cyclohydrolase (hisI) from Saccharolobus solfataricus (strain ATCC 35092 / DSM 1617 / JCM 11322 / P2) (Sulfolobus solfataricus).